Reading from the N-terminus, the 632-residue chain is Transcription factor asR4 (632 aa).

Residues 26 to 52 constitute a DNA-binding region (zn(2)-C6 fungal-type); sequence CDSCNKSKTKCPGGNPCPLCQCSGIRC. Residues 101 to 111 show a composition bias toward polar residues; sequence HISSNPSPVGS. 3 disordered regions span residues 101 to 129, 270 to 311, and 324 to 356; these read HISSNPSPVGSQSQQQQHPQQAGQQQQQQ, SNEY…GDGH, and TSASSIVEQQSIPTSPVTVAPMSPAKSSSVPRT. Positions 112 to 129 are enriched in low complexity; sequence QSQQQQHPQQAGQQQQQQ. Polar residues-rich tracts occupy residues 270 to 286, 294 to 306, and 329 to 340; these read SNEYSTSSNSKPSTTDD, PDSSTTHRPSSSV, and IVEQQSIPTSPV.

The protein resides in the nucleus. In terms of biological role, transcription factor; part of the gene cluster that mediates the biosynthesis of xenovulene A, an unusual meroterpenoid that has potent inhibitory effects on the human gamma-aminobutyrate A (GABAA) benzodiazepine receptor. This chain is Transcription factor asR4, found in Sarocladium schorii (Acremonium strictum (strain IMI 501407)).